Reading from the N-terminus, the 206-residue chain is N-(5'-phosphoribosyl)anthranilate isomerase (206 aa).

It belongs to the TrpF family.

It carries out the reaction N-(5-phospho-beta-D-ribosyl)anthranilate = 1-(2-carboxyphenylamino)-1-deoxy-D-ribulose 5-phosphate. It functions in the pathway amino-acid biosynthesis; L-tryptophan biosynthesis; L-tryptophan from chorismate: step 3/5. This Pseudomonas syringae pv. tomato (strain ATCC BAA-871 / DC3000) protein is N-(5'-phosphoribosyl)anthranilate isomerase.